Here is a 597-residue protein sequence, read N- to C-terminus: Sulfite reductase [NADPH] flavoprotein alpha-component (597 aa).

Residues 62-200 (VTVLSASQTG…TADKWIQDVV (139 aa)) form the Flavodoxin-like domain. Residues 68-73 (SQTGNA), 115-118 (STQG), and 151-160 (LGDTSYPNFC) contribute to the FMN site. In terms of domain architecture, FAD-binding FR-type spans 232 to 446 (ENPYTAKLIT…VEPNDNFRLP (215 aa)). FAD-binding positions include Thr320, Asn354, 384-387 (RLYS), 402-404 (SVG), and 417-420 (GVAS). NADP(+)-binding positions include 517 to 518 (SR), 523 to 527 (KIYVQ), and Asp559. FAD is bound at residue Tyr597.

It belongs to the NADPH-dependent sulphite reductase flavoprotein subunit CysJ family. The protein in the N-terminal section; belongs to the flavodoxin family. This sequence in the C-terminal section; belongs to the flavoprotein pyridine nucleotide cytochrome reductase family. As to quaternary structure, alpha(8)-beta(8). The alpha component is a flavoprotein, the beta component is a hemoprotein. Requires FAD as cofactor. FMN serves as cofactor.

It catalyses the reaction hydrogen sulfide + 3 NADP(+) + 3 H2O = sulfite + 3 NADPH + 4 H(+). It functions in the pathway sulfur metabolism; hydrogen sulfide biosynthesis; hydrogen sulfide from sulfite (NADPH route): step 1/1. In terms of biological role, component of the sulfite reductase complex that catalyzes the 6-electron reduction of sulfite to sulfide. This is one of several activities required for the biosynthesis of L-cysteine from sulfate. The flavoprotein component catalyzes the electron flow from NADPH -&gt; FAD -&gt; FMN to the hemoprotein component. This chain is Sulfite reductase [NADPH] flavoprotein alpha-component, found in Mannheimia succiniciproducens (strain KCTC 0769BP / MBEL55E).